A 146-amino-acid chain; its full sequence is uncharacterized protein (146 aa).

This is an uncharacterized protein from Methanothermobacter thermautotrophicus (Methanobacterium thermoformicicum).